The following is a 429-amino-acid chain: Nucleotide exchange factor Sil1 (429 aa).

Residues 1-24 (MSGKQVVILLGSVLILGCLQVAAA) form the signal peptide. An N-linked (GlcNAc...) asparagine glycan is attached at asparagine 29. The disordered stretch occupies residues 70–98 (DESERGTSLQSQPDDQNARESHDDNEPLA). Polar residues predominate over residues 75–84 (GTSLQSQPDD). Over residues 85-94 (QNARESHDDN) the composition is skewed to basic and acidic residues. Residues 104-135 (DIIEESIRRVKEQKKSYAELRKAYKEFQKNFR) adopt a coiled-coil conformation. Residues asparagine 150, asparagine 199, and asparagine 400 are each glycosylated (N-linked (GlcNAc...) asparagine). The Prevents secretion from ER motif lies at 426–429 (HTEL).

It belongs to the SIL1 family.

The protein localises to the endoplasmic reticulum lumen. In terms of biological role, required for protein translocation and folding in the endoplasmic reticulum (ER). Functions as a nucleotide exchange factor for an ER lumenal chaperone of HSP70 family. The polypeptide is Nucleotide exchange factor Sil1 (Drosophila melanogaster (Fruit fly)).